The chain runs to 417 residues: Probable medium-chain specific acyl-CoA dehydrogenase 10, mitochondrial (417 aa).

The N-terminal 15 residues, 1–15 (MLSRIATSSLGLSRS), are a transit peptide targeting the mitochondrion. Residues 148 to 157 (YCVTEPGAGS) and 181 to 183 (WIT) contribute to the FAD site. Position 157 (serine 157) interacts with substrate. 268–271 (DMTR) is a binding site for substrate. Residues 306 to 307 (HQ) and 364 to 368 (QIFGG) each bind FAD. The active-site Proton acceptor is the glutamate 391. A substrate-binding site is contributed by glycine 392. 393 to 395 (TSQ) is an FAD binding site.

This sequence belongs to the acyl-CoA dehydrogenase family. As to quaternary structure, homotetramer. The cofactor is FAD. Expressed in the epidermis and intestine.

Its subcellular location is the mitochondrion matrix. The enzyme catalyses a medium-chain 2,3-saturated fatty acyl-CoA + oxidized [electron-transfer flavoprotein] + H(+) = a medium-chain (2E)-enoyl-CoA + reduced [electron-transfer flavoprotein]. It participates in lipid metabolism; mitochondrial fatty acid beta-oxidation. In terms of biological role, this enzyme is specific for acyl chain lengths of 4 to 16. The chain is Probable medium-chain specific acyl-CoA dehydrogenase 10, mitochondrial (acdh-10) from Caenorhabditis elegans.